Consider the following 330-residue polypeptide: Peroxidase 55 (330 aa).

The N-terminal stretch at 1–30 (MDIRSDDAKKPMMMWFLGMLLFSMVAESNA) is a signal peptide. Disulfide bonds link cysteine 41–cysteine 121, cysteine 74–cysteine 79, cysteine 127–cysteine 326, and cysteine 206–cysteine 238. Residue histidine 72 is the Proton acceptor of the active site. Ca(2+) is bound by residues aspartate 73, valine 76, glycine 78, aspartate 80, and serine 82. Residue proline 169 coordinates substrate. Histidine 199 is a binding site for heme b. Threonine 200 contacts Ca(2+). A glycan (N-linked (GlcNAc...) asparagine) is linked at asparagine 215. Residues aspartate 250, serine 253, and aspartate 258 each coordinate Ca(2+).

The protein belongs to the peroxidase family. Classical plant (class III) peroxidase subfamily. The cofactor is heme b. Requires Ca(2+) as cofactor. As to expression, slightly expressed in roots.

The protein localises to the secreted. It carries out the reaction 2 a phenolic donor + H2O2 = 2 a phenolic radical donor + 2 H2O. Functionally, removal of H(2)O(2), oxidation of toxic reductants, biosynthesis and degradation of lignin, suberization, auxin catabolism, response to environmental stresses such as wounding, pathogen attack and oxidative stress. These functions might be dependent on each isozyme/isoform in each plant tissue. The polypeptide is Peroxidase 55 (PER55) (Arabidopsis thaliana (Mouse-ear cress)).